The chain runs to 511 residues: Ulvan-active sulfatase (511 aa).

A signal peptide spans 1-34; the sequence is MNFKQNIVYKKMAISMKITAIRPIALVISFTLLS. Residue C35 is the site of N-palmitoyl cysteine attachment. C35 is lipidated: S-diacylglycerol cysteine. Ca(2+) is bound by residues D59 and C99. The Nucleophile role is filled by C99. Residue C99 is modified to 3-oxoalanine (Cys). The active site involves H149. Residue D305 participates in Ca(2+) binding.

The protein belongs to the sulfatase family. The cofactor is Ca(2+). The conversion to 3-oxoalanine (also known as C-formylglycine, FGly), of a serine or cysteine residue in prokaryotes and of a cysteine residue in eukaryotes, is critical for catalytic activity. This post-translational modification is severely defective in multiple sulfatase deficiency (MSD).

The protein localises to the cell membrane. Its function is as follows. Sulfatase involved in ulvan degradation. Ulvan is the main polysaccharide component of the Ulvales (green seaweed) cell wall. It is composed of disaccharide building blocks comprising 3-sulfated rhamnose (Rha3S) linked to D-glucuronic acid (GlcA), L-iduronic acid (IduA), or D-xylose (Xyl). The polypeptide is Ulvan-active sulfatase (Formosa agariphila (strain DSM 15362 / KCTC 12365 / LMG 23005 / KMM 3901 / M-2Alg 35-1)).